Consider the following 424-residue polypeptide: CinA-like protein (424 aa).

It belongs to the CinA family.

The chain is CinA-like protein from Shewanella denitrificans (strain OS217 / ATCC BAA-1090 / DSM 15013).